The primary structure comprises 433 residues: MLAILGFLMMLVFMALIMTKRLSVLTALVLTPIVFALIAGFGFTEVGDMMISGIQQVAPTAVMIMFAILYFGIMIDTGLFDPMVGKILSMVKGDPLKIVVGTAVLTMLVALDGDGSTTYMITTSAMLPLYLLLGIRPIILAGIAGVGMGIMNTIPWGGATPRAASALGVDPAELTGPMIPVIASGMLCMVAVAYVLGKAERKRLGVIELKQPANANEPAAAVEDEWKRPKLWWFNLLLTLSLIGCLVSGKVSLTVLFVIAFCIALIVNYPNLEHQRQRIAAHSSNVLAIGSMIFAAGVFTGILTGTKMVDEMAISLVSMIPEQMGGLIPAIVALTSGIFTFLMPNDAYFYGVLPILSETAVAYGVDKVEIARASIIGQPIHMLSPLVPSTHLLVGLVGVSIDDHQKFALKWAVLAVIVMTAIALLIGAISISV.

Helical transmembrane passes span 2–22 (LAIL…TKRL), 24–44 (VLTA…FGFT), 60–80 (TAVM…TGLF), 98–118 (IVVG…GSTT), 131–151 (LLLG…MGIM), 176–196 (GPMI…AYVL), 247–267 (VSGK…ALIV), 286–306 (VLAI…LTGT), 324–344 (MGGL…FLMP), 345–365 (NDAY…AYGV), 379–399 (PIHM…LVGV), and 411–431 (WAVL…AISI).

The protein belongs to the CitM (TC 2.A.11) transporter family.

It is found in the cell membrane. The uptake activity increases with increasing Mg(2+) concentrations. Inhibited by FCCP, TCC and nigericin. Functionally, proton motive force-driven secondary transporter that mediates the transport of citrate complexed to Mg(2+). Cotransports at least two protons per Mg(2+)-citrate complex. Can also transport citrate in complex with Ni(2+), Mn(2+), Co(2+), and Zn(2+). The polypeptide is Mg(2+)/citrate complex secondary transporter (citM) (Bacillus subtilis (strain 168)).